The sequence spans 442 residues: Protein bag of marbles (442 aa).

Positions 201–250 (FDMPVKSTMPKSLNVRYQLQVLCTKVERFLVQQRRTLEANRHFDFEKYDE) are required for interaction with ubiquitin. The interval 408-442 (VSMEQPSASEEEFEETEEVPSSPPRHTGRVPRFRS) is disordered. Over residues 416–425 (SEEEFEETEE) the composition is skewed to acidic residues. Over residues 433 to 442 (HTGRVPRFRS) the composition is skewed to basic residues.

As to quaternary structure, interacts (via central region) with ubiquitin. Interacts (via C-terminus) with otu (via OTU domain); the interaction enhances otu aggregation into amyloid-like structures and enhances its deubiquitinase activity. Together with otu interacts with CycA/cyclin-A (via C-terminus); the interaction stabilizes CycA by promoting and enhancing otu dependent deubiquitination of CycA. Together with otu interacts with Traf6. Part of a complex composed of at least tut, bam and bgcn; complex formation does not require RNA. Interacts (via C-terminus) with bgcn; the interaction is direct and is not disrupted by eIF4A. Interacts with eIF4A (via multiple contacts); the interaction is direct and is not disrupted by bgcn. Interacts (via N-terminus) with tut; the interaction is direct and mediates the interaction between tut and bgcn. As part of the bam-bgcn-tut complex associates with twin; may recruit the CCR4-NOT1 deadenylation complex to mRNA 3'-UTRs to mediate post-transcriptional regulation of expression. Part of a complex composed of at least mei-P26, bam, bgcn and Sxl; this complex is involved in translational repression of nanos mRNA. Post-translationally, ubiquitinated (C-terminal region). In cystoblasts and/or very early cystocytes in testis (at protein level); expression levels are regulated by mei-P26. In cystoblasts and/or very early cystocytes in ovary. Expressed in the gut; expression levels increase with age.

The protein resides in the cytoplasm. Regulatory component of a deubiquitinase complex consisting of bam and otu. The complex deubiquitinates K63-linked polyubiquitinated proteins, antagonizing the ubiquitination activity of Traf6 and regulating the IMD immune signaling pathway. Otu-bam deubiquitinase activity is regulated by Traf6 dependent immune signaling regulation of bam expression levels; this forms a feedback loop that regulates the IMD immune signaling pathway and balances gut immune activity during aging. The complex deubiquitinates and stabilizes CycA/cyclin-A to regulate CycA-dependent differentiation. Required to initiate both male and female gametogenesis. Part of a complex with bgcn involved in 3'-UTR-dependent translational repression of a subset of mRNAs, including those for mei-P26, nanos and shg/E-cadherin. Repression of mei-P26 is targeted by let-7 miRNA. Involved in a regulatory cascade with mei-P26 to control the progression of cystocytes through transit amplification and the switch to spermatocyte differentiation; mei-P26 facilitates bam accumulation, which in turn represses translation of mei-P26. Forms a complex with tut and bgcn involved in 3'-UTR-dependent post-transcriptional repression of several 3'-RNA processing factors, which promotes germline stem cell lineage differentiation and mitosis-to-meiosis transition. This is Protein bag of marbles from Drosophila melanogaster (Fruit fly).